The primary structure comprises 868 residues: Receptor-like protein 32 (868 aa).

A signal peptide spans 1 to 32 (MKDSWNSTSIIPFTFSSLIFFLFTFDFQDVFG). Residues 33–815 (VPTKHLCRLE…PPELEEEDRE (783 aa)) are Extracellular-facing. N-linked (GlcNAc...) asparagine glycans are attached at residues Asn-73, Asn-109, Asn-141, and Asn-165. 25 LRR repeats span residues 118-142 (LRFL…IENF), 143-166 (SHLT…IGNL), 168-188 (QLTF…FFGN), 189-213 (MNQL…LLNL), 214-237 (KHLS…MSSL), 239-261 (NLEY…LFTI), 262-285 (ASLT…NISS), 287-310 (STLT…ISKF), 312-334 (NLQD…IFTN), 335-360 (LKSL…LFSS), 362-385 (LNSI…SVAD), 389-412 (TQLI…LRSQ), 413-436 (HKMT…LWTL), 438-459 (KLIF…TEHG), 465-489 (KPSM…ICAL), 490-515 (RSLI…NLKS), 517-538 (LSFL…IFKS), 540-560 (RSLD…FIRL), 561-586 (SALE…SLKK), 588-606 (QVLV…HASF), 607-630 (HTLR…YFVN), 675-699 (LKIY…IGLL), 700-723 (KELH…MGNL), 724-747 (RELE…LGNL), and 749-772 (YLAY…QFRR). A glycan (N-linked (GlcNAc...) asparagine) is linked at Asn-233. Asn-275 and Asn-282 each carry an N-linked (GlcNAc...) asparagine glycan. Asn-342 and Asn-347 each carry an N-linked (GlcNAc...) asparagine glycan. N-linked (GlcNAc...) asparagine glycans are attached at residues Asn-477 and Asn-503. An N-linked (GlcNAc...) asparagine glycan is attached at Asn-574. An N-linked (GlcNAc...) asparagine glycan is attached at Asn-613. N-linked (GlcNAc...) asparagine glycosylation is found at Asn-706, Asn-746, Asn-754, and Asn-774. The helical transmembrane segment at 816 to 836 (VFSWIAAAIGFGPGIAFGLTI) threads the bilayer. At 837-868 (RYILVFYKPDWFMHTFGHLQPSAHEKRLRRKQ) the chain is on the cytoplasmic side.

The protein belongs to the RLP family.

Its subcellular location is the cell membrane. The chain is Receptor-like protein 32 from Arabidopsis thaliana (Mouse-ear cress).